Here is a 375-residue protein sequence, read N- to C-terminus: Outer membrane porin C (375 aa).

The N-terminal stretch at 1–21 is a signal peptide; that stretch reads MKVKVLSLLVPALLVAGAANA. Residues 22 to 33 lie on the Periplasmic side of the membrane; sequence AEVYNKDGNKLD. A beta stranded transmembrane segment spans residues 34-42; the sequence is LYGKVDGLH. Topologically, residues 43 to 53 are extracellular; it reads YFSDDKSVDGD. A beta stranded transmembrane segment spans residues 54-63; the sequence is QTYMRLGFKG. The Periplasmic portion of the chain corresponds to 64 to 73; the sequence is ETQVTDQLTG. Residues 74-84 form a beta stranded membrane-spanning segment; it reads YGQWEYQIQGN. Topologically, residues 85–91 are extracellular; the sequence is APESENN. A beta stranded transmembrane segment spans residues 92–101; the sequence is SWTRVAFAGL. The Periplasmic portion of the chain corresponds to 102–106; the sequence is KFQDI. A beta stranded membrane pass occupies residues 107 to 115; that stretch reads GSFDYGRNY. Over 116–141 the chain is Extracellular; the sequence is GVVYDVTSWTDVLPEFGGDTYGSDNF. The chain crosses the membrane as a beta stranded span at residues 142 to 154; it reads MQQRGNGFATYRN. Over 155–163 the chain is Periplasmic; it reads TDFFGLVDG. A beta stranded membrane pass occupies residues 164–171; the sequence is LNFAVQYQ. At 172–204 the chain is on the extracellular side; sequence GQNGSVSGENDPDFTGHGITNNGRKALRQNGDG. The chain crosses the membrane as a beta stranded span at residues 205 to 211; it reads VGGSITY. The Periplasmic segment spans residues 212-215; it reads DYEG. The beta stranded transmembrane segment at 216-223 threads the bilayer; the sequence is FGVGAAVS. Residues 224 to 245 lie on the Extracellular side of the membrane; it reads SSKRTDAQNTAAYIGNGDRAET. The chain crosses the membrane as a beta stranded span at residues 246–252; sequence YTGGLKY. Topologically, residues 253–256 are periplasmic; that stretch reads DANN. The beta stranded transmembrane segment at 257–264 threads the bilayer; sequence IYLAAQYT. Residues 265–273 are Extracellular-facing; sequence QTYNATRVG. Residues 274 to 290 traverse the membrane as a beta stranded segment; it reads SLGWANKAQNFEAVAQY. The Periplasmic portion of the chain corresponds to 291–295; that stretch reads QFDFG. A beta stranded transmembrane segment spans residues 296-303; sequence LRPSVAYL. At 304-326 the chain is on the extracellular side; the sequence is QSKGKNLGTIGTRNYDDEDILKY. The beta stranded transmembrane segment at 327–334 threads the bilayer; it reads VDVGATYY. Over 335–338 the chain is Periplasmic; that stretch reads FNKN. The chain crosses the membrane as a beta stranded span at residues 339–346; sequence MSTYVDYK. Over 347–366 the chain is Extracellular; that stretch reads INLLDDNQFTRDAGINTDNI. Residues 367-374 form a beta stranded membrane-spanning segment; the sequence is VALGLVYQ. A topological domain (periplasmic) is located at residue Phe-375.

This sequence belongs to the Gram-negative porin family. In terms of assembly, homotrimer. Forms mixed heterotrimers with OmpF; other mixed heterotrimers are also probable.

The protein resides in the cell outer membrane. In terms of biological role, forms pores that allow passive diffusion of small molecules across the outer membrane. (Microbial infection) Supports colicin E5 entry in the absence of its major receptor OmpF. Functionally, (Microbial infection) A mixed OmpC-OmpF heterotrimer is the outer membrane receptor for toxin CdiA-EC536. This Escherichia coli O6:K15:H31 (strain 536 / UPEC) protein is Outer membrane porin C (ompC).